Reading from the N-terminus, the 72-residue chain is Beta-defensin 104A (72 aa).

The first 22 residues, 1–22 (MRRLVLLLAISLLLYQDLPVRS), serve as a signal peptide directing secretion. 3 cysteine pairs are disulfide-bonded: C30–C57, C37–C51, and C41–C58.

This sequence belongs to the beta-defensin family.

Its subcellular location is the secreted. Its function is as follows. Has antimicrobial activity. This is Beta-defensin 104A (DEFB104A) from Gorilla gorilla gorilla (Western lowland gorilla).